The following is a 334-amino-acid chain: Malate dehydrogenase, cytoplasmic (334 aa).

Serine 2 bears the N-acetylserine mark. Residues 11–17 (GAAGQIA) and aspartate 42 contribute to the NAD(+) site. Residues arginine 92 and arginine 98 each coordinate substrate. Asparagine 105 serves as a coordination point for NAD(+). The residue at position 110 (lysine 110) is an N6-succinyllysine. Residue glutamine 112 participates in NAD(+) binding. Lysine 118 and lysine 121 each carry N6-acetyllysine. Position 129–131 (129–131 (VGN)) interacts with NAD(+). Substrate-binding residues include asparagine 131 and arginine 162. Catalysis depends on histidine 187, which acts as the Proton acceptor. Position 214 is an N6-succinyllysine (lysine 214). At serine 217 the chain carries Phosphoserine. The residue at position 230 (arginine 230) is an Omega-N-methylarginine. Residue serine 241 is modified to Phosphoserine. Lysine 298 is modified (N6-acetyllysine; alternate). An N6-succinyllysine; alternate modification is found at lysine 298. Serine 309 is subject to Phosphoserine. Lysine 318 carries the N6-succinyllysine modification. Residues serine 332 and serine 333 each carry the phosphoserine modification.

Belongs to the LDH/MDH superfamily. MDH type 2 family. As to quaternary structure, homodimer. Post-translationally, ISGylated. In terms of processing, acetylation at Lys-118 dramatically enhances enzymatic activity and promotes adipogenic differentiation.

It localises to the cytoplasm. The protein resides in the cytosol. The enzyme catalyses (S)-malate + NAD(+) = oxaloacetate + NADH + H(+). It carries out the reaction (2R)-2-hydroxy-3-(4-hydroxyphenyl)propanoate + NAD(+) = 3-(4-hydroxyphenyl)pyruvate + NADH + H(+). It catalyses the reaction (S)-2-hydroxyglutarate + NAD(+) = 2-oxoglutarate + NADH + H(+). In terms of biological role, catalyzes the reduction of aromatic alpha-keto acids in the presence of NADH. Plays essential roles in the malate-aspartate shuttle and the tricarboxylic acid cycle, important in mitochondrial NADH supply for oxidative phosphorylation. Catalyzes the reduction of 2-oxoglutarate to 2-hydroxyglutarate, leading to elevated reactive oxygen species (ROS). The polypeptide is Malate dehydrogenase, cytoplasmic (Mdh1) (Rattus norvegicus (Rat)).